The sequence spans 304 residues: Pyridoxal 5'-phosphate synthase subunit PdxS (304 aa).

D34 serves as a coordination point for D-ribose 5-phosphate. K91 acts as the Schiff-base intermediate with D-ribose 5-phosphate in catalysis. G163 lines the D-ribose 5-phosphate pocket. R175 provides a ligand contact to D-glyceraldehyde 3-phosphate. Residues G224 and 245-246 (GS) contribute to the D-ribose 5-phosphate site.

Belongs to the PdxS/SNZ family. In the presence of PdxT, forms a dodecamer of heterodimers.

It catalyses the reaction aldehydo-D-ribose 5-phosphate + D-glyceraldehyde 3-phosphate + L-glutamine = pyridoxal 5'-phosphate + L-glutamate + phosphate + 3 H2O + H(+). It functions in the pathway cofactor biosynthesis; pyridoxal 5'-phosphate biosynthesis. Catalyzes the formation of pyridoxal 5'-phosphate from ribose 5-phosphate (RBP), glyceraldehyde 3-phosphate (G3P) and ammonia. The ammonia is provided by the PdxT subunit. Can also use ribulose 5-phosphate and dihydroxyacetone phosphate as substrates, resulting from enzyme-catalyzed isomerization of RBP and G3P, respectively. The protein is Pyridoxal 5'-phosphate synthase subunit PdxS of Streptomyces avermitilis (strain ATCC 31267 / DSM 46492 / JCM 5070 / NBRC 14893 / NCIMB 12804 / NRRL 8165 / MA-4680).